We begin with the raw amino-acid sequence, 354 residues long: Small ribosomal subunit protein uS2 (354 aa).

The protein belongs to the universal ribosomal protein uS2 family.

This Methylorubrum populi (strain ATCC BAA-705 / NCIMB 13946 / BJ001) (Methylobacterium populi) protein is Small ribosomal subunit protein uS2.